A 331-amino-acid polypeptide reads, in one-letter code: Adenosine deaminase (331 aa).

Zn(2+)-binding residues include histidine 12 and histidine 14. 3 residues coordinate substrate: histidine 14, aspartate 16, and glycine 170. Histidine 197 is a Zn(2+) binding site. The active-site Proton donor is glutamate 200. Residue aspartate 278 participates in Zn(2+) binding. Aspartate 279 contributes to the substrate binding site.

This sequence belongs to the metallo-dependent hydrolases superfamily. Adenosine and AMP deaminases family. Adenosine deaminase subfamily. Zn(2+) serves as cofactor.

It catalyses the reaction adenosine + H2O + H(+) = inosine + NH4(+). The enzyme catalyses 2'-deoxyadenosine + H2O + H(+) = 2'-deoxyinosine + NH4(+). Functionally, catalyzes the hydrolytic deamination of adenosine and 2-deoxyadenosine. The protein is Adenosine deaminase of Shewanella baltica (strain OS155 / ATCC BAA-1091).